We begin with the raw amino-acid sequence, 165 residues long: Neurotrophin-3 (165 aa).

Positions 1–3 are cleaved as a signal peptide; the sequence is IQS. Residues 4–119 constitute a propeptide that is removed on maturation; that stretch reads TSMDQGSLSE…VLNRTSRRKR (116 aa). Residue Asn112 is glycosylated (N-linked (GlcNAc...) asparagine).

Belongs to the NGF-beta family.

Its subcellular location is the secreted. In terms of biological role, seems to promote the survival of visceral and proprioceptive sensory neurons. The polypeptide is Neurotrophin-3 (NTF3) (Anilius scytale (Coral cylinder snake)).